The sequence spans 361 residues: Chorismate synthase (361 aa).

Residues 37–59 form a disordered region; it reads TEADLQHDLDRRRPGTSRYTTQR. The span at 40-49 shows a compositional bias: basic and acidic residues; that stretch reads DLQHDLDRRR. R48 and R54 together coordinate NADP(+). Residues 125-127, 238-239, G278, 293-297, and R319 each bind FMN; these read RSS, NA, and KPTSS.

It belongs to the chorismate synthase family. As to quaternary structure, homotetramer. It depends on FMNH2 as a cofactor.

The enzyme catalyses 5-O-(1-carboxyvinyl)-3-phosphoshikimate = chorismate + phosphate. It functions in the pathway metabolic intermediate biosynthesis; chorismate biosynthesis; chorismate from D-erythrose 4-phosphate and phosphoenolpyruvate: step 7/7. Its function is as follows. Catalyzes the anti-1,4-elimination of the C-3 phosphate and the C-6 proR hydrogen from 5-enolpyruvylshikimate-3-phosphate (EPSP) to yield chorismate, which is the branch point compound that serves as the starting substrate for the three terminal pathways of aromatic amino acid biosynthesis. This reaction introduces a second double bond into the aromatic ring system. This chain is Chorismate synthase, found in Serratia proteamaculans (strain 568).